Reading from the N-terminus, the 200-residue chain is DNA-binding protein HupB (200 aa).

Positions 1-90 are bacterial histone-like domain; sequence MNKAELIDVL…PGAQFKAVVA (90 aa). Lys-3, Lys-72, Lys-86, Lys-103, Lys-137, Lys-144, and Lys-156 each carry N6-acetyllysine. The interval 101–200 is degenerate repeats region; sequence AVKRGVATSA…KVTAAKRGRK (100 aa). Residues 179–200 form a disordered region; sequence AKKAAVKKAPAKKVTAAKRGRK.

Belongs to the bacterial histone-like protein family. Long actinobacterial subfamily. In terms of assembly, binds to human laminin-2. May also be methylated and possibly phosphorylated in vivo.

The protein resides in the cytoplasm. Its subcellular location is the nucleoid. It is found in the secreted. The protein localises to the cell wall. It localises to the cell surface. It carries out the reaction 4 Fe(2+) + O2 + 4 H(+) = 4 Fe(3+) + 2 H2O. Functionally, a nucleoid-associated protein (NAP) that plays a role in local chromosome architecture and chromosome compactation. Required for biofilm formation, stress survival and possibly in cell wall assembly, probably influences transcription. RNase E and HupB jointly contribute to cellular adaptation to changing growth conditions and survival during antibiotic treatment and in the host. Its function is as follows. Binds Fe(3+) but not Fe(2+). Has ferroxidase activity, converts Fe(2+) into Fe(3+) and in the presence of H(2)O(2) prevents the generation of hydroxyl radicals (the Fenton reaction). Protects DNA from damage in the presence of FeSO(4) and H(2)O(2). May function in iron storage. May be involved in entry into human Schwann cells. The chain is DNA-binding protein HupB from Mycobacterium leprae (strain TN).